Here is a 358-residue protein sequence, read N- to C-terminus: Holliday junction branch migration complex subunit RuvB (358 aa).

The disordered stretch occupies residues 1–24; that stretch reads MAIKRSHNSPPATEENLLTPNPTI. Residues 8–22 show a composition bias toward polar residues; it reads NSPPATEENLLTPNP. Residues 13–195 are large ATPase domain (RuvB-L); that stretch reads TEENLLTPNP…FGLIQRLRFY (183 aa). Residues I34, R35, G76, K79, T80, T81, 142–144, R185, Y195, and R232 contribute to the ATP site; that span reads EDY. T80 provides a ligand contact to Mg(2+). Residues 196 to 266 form a small ATPAse domain (RuvB-S) region; sequence AVEELTAIIL…LAAEGLNQLN (71 aa). Positions 269–358 are head domain (RuvB-H); sequence SMGLDWTDRL…KDRSLPLFEF (90 aa). DNA contacts are provided by R324 and R329.

Belongs to the RuvB family. Homohexamer. Forms an RuvA(8)-RuvB(12)-Holliday junction (HJ) complex. HJ DNA is sandwiched between 2 RuvA tetramers; dsDNA enters through RuvA and exits via RuvB. An RuvB hexamer assembles on each DNA strand where it exits the tetramer. Each RuvB hexamer is contacted by two RuvA subunits (via domain III) on 2 adjacent RuvB subunits; this complex drives branch migration. In the full resolvosome a probable DNA-RuvA(4)-RuvB(12)-RuvC(2) complex forms which resolves the HJ.

It localises to the cytoplasm. It catalyses the reaction ATP + H2O = ADP + phosphate + H(+). In terms of biological role, the RuvA-RuvB-RuvC complex processes Holliday junction (HJ) DNA during genetic recombination and DNA repair, while the RuvA-RuvB complex plays an important role in the rescue of blocked DNA replication forks via replication fork reversal (RFR). RuvA specifically binds to HJ cruciform DNA, conferring on it an open structure. The RuvB hexamer acts as an ATP-dependent pump, pulling dsDNA into and through the RuvAB complex. RuvB forms 2 homohexamers on either side of HJ DNA bound by 1 or 2 RuvA tetramers; 4 subunits per hexamer contact DNA at a time. Coordinated motions by a converter formed by DNA-disengaged RuvB subunits stimulates ATP hydrolysis and nucleotide exchange. Immobilization of the converter enables RuvB to convert the ATP-contained energy into a lever motion, pulling 2 nucleotides of DNA out of the RuvA tetramer per ATP hydrolyzed, thus driving DNA branch migration. The RuvB motors rotate together with the DNA substrate, which together with the progressing nucleotide cycle form the mechanistic basis for DNA recombination by continuous HJ branch migration. Branch migration allows RuvC to scan DNA until it finds its consensus sequence, where it cleaves and resolves cruciform DNA. This Microcystis aeruginosa (strain NIES-843 / IAM M-2473) protein is Holliday junction branch migration complex subunit RuvB.